Reading from the N-terminus, the 709-residue chain is Putative extracellular sulfatase Sulf-1 homolog (709 aa).

The signal sequence occupies residues 1–27 (MISNLRISNYFIIFYVLFLIIPIKVTS). 3 residues coordinate Ca(2+): Asp43, Asp44, and Cys79. Cys79 serves as the catalytic Nucleophile. A 3-oxoalanine (Cys) modification is found at Cys79. Asn103, Asn162, and Asn189 each carry an N-linked (GlcNAc...) asparagine glycan. The Ca(2+) site is built by Asp308 and His309. 7 N-linked (GlcNAc...) asparagine glycosylation sites follow: Asn344, Asn468, Asn500, Asn540, Asn566, Asn610, and Asn620.

It belongs to the sulfatase family. It depends on Ca(2+) as a cofactor. In terms of processing, the conversion to 3-oxoalanine (also known as C-formylglycine, FGly), of a serine or cysteine residue in prokaryotes and of a cysteine residue in eukaryotes, is critical for catalytic activity.

It localises to the endoplasmic reticulum. It is found in the golgi apparatus. The protein localises to the golgi stack. The protein resides in the cell surface. The sequence is that of Putative extracellular sulfatase Sulf-1 homolog (sul-1) from Caenorhabditis elegans.